The sequence spans 951 residues: MEPQLTPGAVQAIAEHPDGTGTIQPVLQVVDVRPVTTKNAPPTPKPAERFRMMLSDGVNTQQSMLATALNPLVKDATLRPGTVVQLTDFMCNTIQGKRIIIVVKLDVLQNDCIVIGNPKHYEPKSLTKEQDPNLQASVAQTNNGTYSGGASMLGPSVAPRAEQAASNSSYGGPYNSAQGMLGSSIGRTVEPGPANVSAVGSYGAISAQNTTNANMMQPTSQLNIMNANTMQPTSQLNTMNANTMQPTSQLSSLNPNQNQRFAAPASGGVFGPPGNAYGQPSRPSYQQPPPVYMNRGPASRNDSATRIIPITALNPYQPKWTIKARVTAKSDIRHWSNARSSGTVFSFDLLDAQGGEIRAQCWKESADKFFGQIEVGRVYLISRGSLKPAQKKYNTLNHDYEITLDIGLSTVEVCSDDDNSIPRLQYNFRQISELENMANETIVDLLGVVTSVSPSATIMRKIGTETRKRSIQLKDLSGRSIEVTLWGNFCDAEGQQLQLQCDSGSNPIIAFKGARVGDFNGKSVSTIGSTQLIINPDFPEVERLRQWYMTEGKTAPCISLSREMLNMGRTDARKTIAQIKDENLGRLEKPDWITVKAAISHVTTESFCYPACPKLLPVGRQCNKKAINNGDGMWHCDRCDESFQNPEYRYMLRFQIQDHTGSTYASAFDEAGEQIFGRKAGELFSIRNVDQDDAQFAEIIEGVRWHLYLFKLKVKEETYNDEQSLKCTAVKVEKLDPSKESNVLLGAIDNLLLDPKGQSDLAPNAGFTDPVGGHGAPTSSNAYAMNTGGVNQFGQQASISAGMSTPLAATRNLQTCSICGANGHSAQICHVGADMDMQETSAGGSSMGNYNSIAGNGSSECYKCKQPGHYARDCPGQSTGGLECFKCKQPGHFSRDCPVQSTGGSECFKCKQPGHFARDCPGQSTGAQHQTYGNNVAASRGYNRQSFVGGY.

Positions 139–172 are disordered; sequence AQTNNGTYSGGASMLGPSVAPRAEQAASNSSYGG. A DNA-binding region (OB) is located at residues 320–403; that stretch reads WTIKARVTAK…NTLNHDYEIT (84 aa). Residues 612–639 form a C4-type zinc finger; the sequence is CPKLLPVGRQCNKKAINNGDGMWHCDRC.

Belongs to the replication factor A protein 1 family. As to quaternary structure, heterotrimer of RPA1, RPA2 and RPA3 (canonical replication protein A complex). Interacts with RPA2C.

Its subcellular location is the nucleus. In terms of biological role, component of the replication protein A complex (RPA) required for DNA recombination, repair and replication. The activity of RPA is mediated by single-stranded DNA binding and protein interactions. Probably involved in repair of double-strand DNA breaks (DSBs) induced by genotoxic stresses. This Oryza sativa subsp. japonica (Rice) protein is Replication protein A 70 kDa DNA-binding subunit C (RPA1C).